The sequence spans 846 residues: SLIT and NTRK-like protein 2 (846 aa).

The first 21 residues, 1–21 (MLSGVWFLSVLTVAGILQTES), serve as a signal peptide directing secretion. Residues 22 to 622 (RKTAKDICKI…LHTEVPLSVL (601 aa)) are Extracellular-facing. Intrachain disulfides connect C29/C35 and C33/C46. 6 LRR repeats span residues 63-84 (RIYQ…EFVN), 87-108 (NAVT…AFSG), 111-132 (TLKR…TFLG), 135-156 (SLEY…AFSK), 159-180 (KLKV…VFRF), and 182-203 (LLTH…GVLE). N84 is a glycosylation site (N-linked (GlcNAc...) asparagine). The segment at 167–215 (DNLLLSLPSNVFRFVLLTHLDLRGNRLKVMPFAGVLEHIGGIMEIQLEE) is required for interaction with PTPRD. Positions 216–265 (NPWNCTCDLLPLKAWLDTITVFVGEIVCETPFRLHGKDVTQLTRQDLCPR) constitute an LRRCT 1 domain. N-linked (GlcNAc...) asparagine glycosylation occurs at N219. 2 disulfide bridges follow: C220-C243 and C222-C263. The segment at 261 to 322 (DLCPRKSASG…TPRVTVSKDR (62 aa)) is disordered. Composition is skewed to low complexity over residues 267–276 (SASGDSSQRS) and 285–300 (RLTP…TRAP). The LRRNT domain occupies 332–374 (QTKSPVALTCPSSCVCTSQSSDNGLNVNCQERKFTNISDLQPK). LRR repeat units lie at residues 377-398 (SPKK…DLLE), 401-422 (SLDL…AFTN), 425-446 (SLRR…MFDG), 449-470 (SLQY…TFDA), 473-494 (NLQL…IFGG), and 496-517 (ALTR…GVLD). N-linked (GlcNAc...) asparagine glycosylation occurs at N422. The region spanning 530-581 (NPWDCTCDIMGLKDWTEHANSPVIINEVTCESPAKHAGEILKFLGREAICPE) is the LRRCT 2 domain. The helical transmembrane segment at 623 to 643 (ILGLLVVFILSVCFGAGLFVF) threads the bilayer. Residues 644–846 (VLKRRKGVPN…LEKQTAISQL (203 aa)) lie on the Cytoplasmic side of the membrane. Y757 carries the phosphotyrosine modification.

It belongs to the SLITRK family. Interacts with PTPRD; this interaction is PTPRD splicing-dependent and may induce pre-synaptic differentiation. Interacts with NTRK2. In the adult, significant expression is detected only in the brain. Broadly expressed in embryonic brain with highest expression in ventricular layer, subventricular zone, cortical plate, pyramidal layer of hippocampus, subicular neuroepithelium, thalamus, hypothalamus and spinal cord.

The protein resides in the membrane. It localises to the cell membrane. It is found in the cell projection. The protein localises to the dendrite. Its function is as follows. It is involved in synaptogenesis. Promotes excitatory synapse differentiation. Suppresses neurite outgrowth. Involved in the negative regulation of NTRK2. The chain is SLIT and NTRK-like protein 2 (Slitrk2) from Mus musculus (Mouse).